The sequence spans 326 residues: uncharacterized protein (326 aa).

Solcar repeat units follow at residues 20–107 (QDSN…CKKK), 120–219 (LTNT…LREF), and 231–322 (KSNL…VCDS). The next 6 membrane-spanning stretches (helical) occupy residues 24 to 40 (IAFL…RTVV), 84 to 104 (GLNC…YEAC), 126 to 143 (LFSG…TYPL), 195 to 213 (VWPT…FAVY), 237 to 254 (LTIG…TYPF), and 297 to 316 (GLAA…WLVY).

Belongs to the mitochondrial carrier (TC 2.A.29) family.

The protein localises to the mitochondrion inner membrane. This is an uncharacterized protein from Saccharomyces cerevisiae (strain ATCC 204508 / S288c) (Baker's yeast).